Here is a 1342-residue protein sequence, read N- to C-terminus: Putative aldehyde oxidase-like protein (1342 aa).

A disordered region spans residues 1–23 (MSDCNSGGGERRPNARATDAPPV). The FAD-binding PCMH-type domain occupies 221–408 (ISSPREGWYC…LSIFIPHWAS (188 aa)).

The protein belongs to the xanthine dehydrogenase family.

The chain is Putative aldehyde oxidase-like protein from Oryza sativa subsp. japonica (Rice).